A 205-amino-acid polypeptide reads, in one-letter code: 5'-deoxynucleotidase HDDC2 (205 aa).

At Ala-2 the chain carries N-acetylalanine. Residues Ser-3 and Ser-5 each carry the phosphoserine modification. An HD domain is found at 47 to 149 (VSDHMYRMAV…VKQLDQCEMI (103 aa)). Residues His-50, His-78, Asp-79, Glu-82, Asp-87, Ile-88, and Asp-144 each contribute to the a divalent metal cation site. Residue Ser-205 is modified to Phosphoserine.

It belongs to the HDDC2 family. Homodimer. It depends on Mn(2+) as a cofactor. Co(2+) is required as a cofactor. Requires Mg(2+) as cofactor.

It catalyses the reaction a 2'-deoxyribonucleoside 5'-phosphate + H2O = a 2'-deoxyribonucleoside + phosphate. Catalyzes the dephosphorylation of the nucleoside 5'-monophosphates deoxyadenosine monophosphate (dAMP), deoxycytidine monophosphate (dCMP), deoxyguanosine monophosphate (dGMP) and deoxythymidine monophosphate (dTMP). The sequence is that of 5'-deoxynucleotidase HDDC2 (HDDC2) from Bos taurus (Bovine).